The primary structure comprises 315 residues: Dihydroorotate dehydrogenase (fumarate) (315 aa).

Substrate is bound by residues Lys46, 70 to 74 (NSMGL), and Asn130. 46-47 (KS) provides a ligand contact to FMN. FMN is bound at residue Asn130. The Nucleophile role is filled by Cys133. Lys167 and Ile195 together coordinate FMN. Substrate is bound at residue 196–197 (NS). Residues Gly224, 252-253 (GG), and 274-275 (GT) contribute to the FMN site.

Belongs to the dihydroorotate dehydrogenase family. Type 1 subfamily. As to quaternary structure, homodimer. The cofactor is FMN.

It is found in the cytoplasm. It carries out the reaction (S)-dihydroorotate + fumarate = orotate + succinate. It participates in pyrimidine metabolism; UMP biosynthesis via de novo pathway. In terms of biological role, catalyzes the conversion of dihydroorotate to orotate with fumarate as the electron acceptor. The polypeptide is Dihydroorotate dehydrogenase (fumarate) (URA1) (Kluyveromyces lactis (strain ATCC 8585 / CBS 2359 / DSM 70799 / NBRC 1267 / NRRL Y-1140 / WM37) (Yeast)).